A 560-amino-acid polypeptide reads, in one-letter code: Chaperonin GroEL 2 (560 aa).

Residues 29–32 (TLGP), 86–90 (DGTTT), Gly413, 478–480 (NAA), and Asp494 each bind ATP.

It belongs to the chaperonin (HSP60) family. Forms a cylinder of 14 subunits composed of two heptameric rings stacked back-to-back. Interacts with the co-chaperonin GroES.

It is found in the cytoplasm. It catalyses the reaction ATP + H2O + a folded polypeptide = ADP + phosphate + an unfolded polypeptide.. Its function is as follows. Together with its co-chaperonin GroES, plays an essential role in assisting protein folding. The GroEL-GroES system forms a nano-cage that allows encapsulation of the non-native substrate proteins and provides a physical environment optimized to promote and accelerate protein folding. The protein is Chaperonin GroEL 2 of Nostoc sp. (strain PCC 7120 / SAG 25.82 / UTEX 2576).